Here is a 108-residue protein sequence, read N- to C-terminus: Putative membrane protein insertion efficiency factor (108 aa).

Belongs to the UPF0161 family.

It is found in the cell inner membrane. Could be involved in insertion of integral membrane proteins into the membrane. The sequence is that of Putative membrane protein insertion efficiency factor from Chelativorans sp. (strain BNC1).